Consider the following 1135-residue polypeptide: Nonribosomal peptide synthetase 9 (1135 aa).

The tract at residues 23–77 is condensation 1; sequence TKQITTATYIKLAWAVVISCNTGSNDTVFGITVNGRGAPIDGAGEMTGATIATIP. The adenylation stretch occupies residues 177 to 562; sequence SYAELIRSAN…RRIDEIQEAT (386 aa). Positions 485–507 are disordered; the sequence is GPSPPVGRSSSNRAGSGRCAMGS. A compositionally biased stretch (low complexity) spans 491 to 502; that stretch reads GRSSSNRAGSGR. Residues 672-748 form the Carrier domain; that stretch reads APSNRVEQDL…AIANKIGDVQ (77 aa). Ser709 carries the post-translational modification O-(pantetheine 4'-phosphoryl)serine. The segment at 746 to 999 is condensation 2; it reads DVQRAAIKLV…TTLWPVVAQV (254 aa).

This sequence belongs to the NRP synthetase family.

In terms of biological role, nonribosomal peptide synthesis (NRPS) is a key mechanism responsible for the biosynthesis of bioactive metabolites which are potentially contributing to organismal virulence. The chain is Nonribosomal peptide synthetase 9 (NRPS9) from Aspergillus fumigatus (strain ATCC MYA-4609 / CBS 101355 / FGSC A1100 / Af293) (Neosartorya fumigata).